A 178-amino-acid polypeptide reads, in one-letter code: Adenine phosphoribosyltransferase (178 aa).

It belongs to the purine/pyrimidine phosphoribosyltransferase family. In terms of assembly, homodimer.

Its subcellular location is the cytoplasm. It catalyses the reaction AMP + diphosphate = 5-phospho-alpha-D-ribose 1-diphosphate + adenine. The protein operates within purine metabolism; AMP biosynthesis via salvage pathway; AMP from adenine: step 1/1. Catalyzes a salvage reaction resulting in the formation of AMP, that is energically less costly than de novo synthesis. This Bacteroides fragilis (strain ATCC 25285 / DSM 2151 / CCUG 4856 / JCM 11019 / LMG 10263 / NCTC 9343 / Onslow / VPI 2553 / EN-2) protein is Adenine phosphoribosyltransferase.